A 342-amino-acid chain; its full sequence is N-acetyl-gamma-glutamyl-phosphate reductase (342 aa).

The active site involves Cys-149.

This sequence belongs to the NAGSA dehydrogenase family. Type 1 subfamily.

It is found in the cytoplasm. The enzyme catalyses N-acetyl-L-glutamate 5-semialdehyde + phosphate + NADP(+) = N-acetyl-L-glutamyl 5-phosphate + NADPH + H(+). It functions in the pathway amino-acid biosynthesis; L-arginine biosynthesis; N(2)-acetyl-L-ornithine from L-glutamate: step 3/4. Functionally, catalyzes the NADPH-dependent reduction of N-acetyl-5-glutamyl phosphate to yield N-acetyl-L-glutamate 5-semialdehyde. In Thiobacillus denitrificans (strain ATCC 25259 / T1), this protein is N-acetyl-gamma-glutamyl-phosphate reductase.